An 858-amino-acid polypeptide reads, in one-letter code: Autoinducer 2 sensor kinase/phosphatase LuxQ (858 aa).

The next 2 helical transmembrane spans lie at 14-34 (STLITKIIILVLAPIILGIFV) and 362-382 (LFNFALSPIMVWSEAGVLIQI). Positions 488–710 (KMSHEIRTPI…TFVVTLPVKD (223 aa)) constitute a Histidine kinase domain. The residue at position 491 (His491) is a Phosphohistidine; by autocatalysis. In terms of domain architecture, Response regulatory spans 735 to 850 (KVLLVEDNHT…ALHEAFVDFK (116 aa)). Asp784 is modified (4-aspartylphosphate).

Binds the complex formed by the autoinducer and LuxP.

It localises to the cell inner membrane. It carries out the reaction ATP + protein L-histidine = ADP + protein N-phospho-L-histidine.. In terms of biological role, at low cell density, in absence of autoinducer has a kinase activity, and autophosphorylates on a histidine residue. The phosphoryl group is then transferred to an aspartate residue in the response regulator domain. The phosphoryl group is transferred to LuxU, and ultimately to LuxO. At high cell density, in the presence of autoinducer, the kinase activity is inactivated, and the response regulator domain has a phosphatase activity. This is Autoinducer 2 sensor kinase/phosphatase LuxQ (luxQ) from Vibrio parahaemolyticus serotype O3:K6 (strain RIMD 2210633).